Reading from the N-terminus, the 153-residue chain is Small ribosomal subunit protein bS6 (153 aa).

Positions 94 to 153 (EAHEEGPSAMMQKRDRDDRPRRDGDRPDRGDRGDRGDRGPREGGRESFGDRPRRPREDRA) are disordered.

It belongs to the bacterial ribosomal protein bS6 family.

Its function is as follows. Binds together with bS18 to 16S ribosomal RNA. In Allorhizobium ampelinum (strain ATCC BAA-846 / DSM 112012 / S4) (Agrobacterium vitis (strain S4)), this protein is Small ribosomal subunit protein bS6.